The sequence spans 104 residues: Small ubiquitin-related modifier 3 (104 aa).

Glycyl lysine isopeptide (Lys-Gly) (interchain with G-Cter in SUMO2) cross-links involve residues Lys-5 and Lys-7. Lys-11 participates in a covalent cross-link: Glycyl lysine isopeptide (Lys-Gly) (interchain with G-Cter in SUMO); alternate. Lys-11 participates in a covalent cross-link: Glycyl lysine isopeptide (Lys-Gly) (interchain with G-Cter in SUMO2); alternate. A Ubiquitin-like domain is found at 15 to 92; it reads DHINLKVAGQ…IDVFQQQTGG (78 aa). Gly-92 participates in a covalent cross-link: Glycyl lysine isopeptide (Gly-Lys) (interchain with K-? in acceptor proteins). Residues 93–104 constitute a propeptide that is removed on maturation; that stretch reads SRVASCLLGSGL.

It belongs to the ubiquitin family. SUMO subfamily. As to quaternary structure, interacts with SAE2 and UBE2I. Covalently attached to a number of proteins. Interacts with USP25 (via ts SIM domain); the interaction sumoylates USP25 and inhibits its ubiquitin hydrolyzing activity. Interacts with BMAL1. Polymeric chains can be formed through Lys-11 cross-linking. In terms of processing, cleavage of precursor form by SENP1, SENP2 or SENP5 is necessary for function.

The protein resides in the cytoplasm. The protein localises to the nucleus. It is found in the PML body. Its function is as follows. Ubiquitin-like protein which can be covalently attached to target lysines either as a monomer or as a lysine-linked polymer. Does not seem to be involved in protein degradation and may function as an antagonist of ubiquitin in the degradation process. Plays a role in a number of cellular processes such as nuclear transport, DNA replication and repair, mitosis and signal transduction. Covalent attachment to its substrates requires prior activation by the E1 complex SAE1-SAE2 and linkage to the E2 enzyme UBE2I, and can be promoted by an E3 ligase such as PIAS1-4, RANBP2 or CBX4. Plays a role in the regulation of sumoylation status of SETX. The polypeptide is Small ubiquitin-related modifier 3 (SUMO3) (Bos taurus (Bovine)).